Reading from the N-terminus, the 488-residue chain is Kelch-like protein 15 (488 aa).

A BTB domain is found at 31 to 98; the sequence is LDVTLVIEDH…MYYGTIELSM (68 aa). The BACK domain occupies 133–237; the sequence is CAEIMRLLDD…TPSSVFEKVK (105 aa). Kelch repeat units lie at residues 328–379, 381–426, and 428–473; these read FVFL…VIGR, VYAV…VLGN, and LYIT…NKCK.

As to quaternary structure, homodimer. Interacts with CUL3.

It localises to the nucleus. The protein operates within protein modification; protein ubiquitination. In terms of biological role, substrate-specific adapter for CUL3 E3 ubiquitin-protein ligase complex. The protein is Kelch-like protein 15 (KLHL15) of Gallus gallus (Chicken).